Consider the following 657-residue polypeptide: Hemocyanin (657 aa).

Residue asparagine 167 is glycosylated (N-linked (GlcNAc...) asparagine). Histidine 194, histidine 198, histidine 224, histidine 344, histidine 348, and histidine 384 together coordinate Cu cation. 2 disulfide bridges follow: cysteine 483–cysteine 502 and cysteine 562–cysteine 609.

Belongs to the tyrosinase family. Hemocyanin subfamily. In terms of assembly, it consists of at least four very similar subunits. As to expression, hemolymph.

The protein resides in the secreted. The protein localises to the extracellular space. Its function is as follows. Hemocyanins are copper-containing oxygen carriers occurring freely dissolved in the hemolymph of many mollusks and arthropods. The protein is Hemocyanin of Palinurus vulgaris (European spiny lobster).